We begin with the raw amino-acid sequence, 295 residues long: UDP-N-acetylenolpyruvoylglucosamine reductase (295 aa).

The FAD-binding PCMH-type domain occupies 23–188 (KVGGPADFLA…ISAKFALKPG (166 aa)). The active site involves R167. The active-site Proton donor is the S217. E287 is an active-site residue.

It belongs to the MurB family. FAD serves as cofactor.

The protein resides in the cytoplasm. It catalyses the reaction UDP-N-acetyl-alpha-D-muramate + NADP(+) = UDP-N-acetyl-3-O-(1-carboxyvinyl)-alpha-D-glucosamine + NADPH + H(+). It functions in the pathway cell wall biogenesis; peptidoglycan biosynthesis. Its function is as follows. Cell wall formation. The chain is UDP-N-acetylenolpyruvoylglucosamine reductase from Streptococcus pyogenes serotype M3 (strain ATCC BAA-595 / MGAS315).